The chain runs to 129 residues: Small ribosomal subunit protein uS13 (129 aa).

The span at 95–114 (NLPVRGQRTKTNARTRRGPR) shows a compositional bias: basic residues. A disordered region spans residues 95–129 (NLPVRGQRTKTNARTRRGPRKTVAGRGQKRGATKK).

Belongs to the universal ribosomal protein uS13 family. As to quaternary structure, part of the 30S ribosomal subunit. Forms a loose heterodimer with protein S19. Forms two bridges to the 50S subunit in the 70S ribosome.

Its function is as follows. Located at the top of the head of the 30S subunit, it contacts several helices of the 16S rRNA. In the 70S ribosome it contacts the 23S rRNA (bridge B1a) and protein L5 of the 50S subunit (bridge B1b), connecting the 2 subunits; these bridges are implicated in subunit movement. Contacts the tRNAs in the A and P-sites. This chain is Small ribosomal subunit protein uS13, found in Dehalococcoides mccartyi (strain ATCC BAA-2100 / JCM 16839 / KCTC 5957 / BAV1).